The following is a 350-amino-acid chain: Geranylgeranyl pyrophosphate synthase (350 aa).

Positions 66, 69, and 98 each coordinate isopentenyl diphosphate. 2 residues coordinate Mg(2+): aspartate 105 and aspartate 109. Arginine 114 is a binding site for dimethylallyl diphosphate. Arginine 115 contributes to the isopentenyl diphosphate binding site. Positions 200, 201, 236, 243, and 263 each coordinate dimethylallyl diphosphate.

The protein belongs to the FPP/GGPP synthase family. It depends on Mg(2+) as a cofactor.

The catalysed reaction is isopentenyl diphosphate + dimethylallyl diphosphate = (2E)-geranyl diphosphate + diphosphate. The enzyme catalyses isopentenyl diphosphate + (2E)-geranyl diphosphate = (2E,6E)-farnesyl diphosphate + diphosphate. It catalyses the reaction isopentenyl diphosphate + (2E,6E)-farnesyl diphosphate = (2E,6E,10E)-geranylgeranyl diphosphate + diphosphate. It functions in the pathway secondary metabolite biosynthesis; terpenoid biosynthesis. Functionally, geranylgeranyl pyrophosphate synthase; part of the gene cluster that mediates the biosynthesis of pleuromutilin, a tricyclic diterpene showing antibacterial properties. The geranylgeranyl diphosphate (GGPP) synthase catalyzes the first step in pleuromutilin biosynthesis. GGPP is then substrate of the premutilin synthase (PS) to yield premutilin. Premutilin synthase is a bifunctional enzyme composed of the fusion of a class II diterpene cyclase (DTC) and a class I diterpene synthase (DTS), with the corresponding domains and active sites containing characteristic aspartate-rich motifs. GGPP is first converted to mutildienyl-diphosphate (MPP) at the class II DTC site. MPP is subsequently further cyclized at the class I DTS site, followed by a 1,5-hydride shift and addition of water prior to terminating deprotonation, to yield premutilin. In addition to the aforementioned GGPP synthase and bifunctional diterpene synthase, the cluster also contains three cytochrome P450 monooxygenases, a short-chain alcohol dehydrogenase, and an acyltransferase, involved in the conversion of premutilin to pleuromutilin. The cytochrome P450 monooxygenases P450-1 and P450-2 hydroxylate premutilin at C-11 and C-3, respectively, producing 11-hydroxypremutilin and 3-hydroxypremutilin. The combination of the actions of both ple5 and ple6 leads to the production of 3,11-dihydroxypremutilin. The short chain dehydrogenase SDR further converts 3,11-dihydroxypremutilin into mutilin. The acetyltransferase ATF then acetylates mutilin to produce 14-O-acetylmutilin. Finally, the cytochrome P450 monooxygenase P450-3 catalyzes hydroxylation on the alpha position of the acetyl side chain of 14-O-acetylmutilin to yield pleuromutilin. This chain is Geranylgeranyl pyrophosphate synthase, found in Clitopilus passeckerianus (Pleurotus passeckerianus).